A 439-amino-acid polypeptide reads, in one-letter code: Telomeric repeat-binding factor 1 (439 aa).

A disordered region spans residues 1 to 36 (MAEDVSSAAPSPRGCADGRDADPTEEQMAETERNDE). At A2 the chain carries N-acetylalanine. S11 carries the post-translational modification Phosphoserine. The segment covering 23–36 (PTEEQMAETERNDE) has biased composition (acidic residues). The segment at 58–268 (EEEEEDAGLV…AAAKVVESKR (211 aa)) is TRFH mediates dimerization. Residue K213 forms a Glycyl lysine isopeptide (Lys-Gly) (interchain with G-Cter in SUMO2) linkage. At S219 the chain carries Phosphoserine; by ATM. The tract at residues 265–378 (ESKRTRTITS…PVTPEKHRAR (114 aa)) is interaction with RLIM. The tract at residues 266-311 (SKRTRTITSQDKPSGNDVEMETEANLDTRKSVSDKQSAVTESSEGT) is disordered. The segment covering 299–311 (DKQSAVTESSEGT) has biased composition (polar residues). Residue K325 forms a Glycyl lysine isopeptide (Lys-Gly) (interchain with G-Cter in SUMO2) linkage. The tract at residues 326 to 375 (LQHGTQQQDLNKKERRVGTPQSTKKKKESRRATESRIPVSKSQPVTPEKH) is disordered. A Nuclear localization signal motif is present at residues 337 to 356 (KKERRVGTPQSTKKKKESRR). K366 is covalently cross-linked (Glycyl lysine isopeptide (Lys-Gly) (interchain with G-Cter in SUMO2)). The 58-residue stretch at 375-432 (HRARKRQAWLWEEDKNLRSGVRKYGEGNWSKILLHYKFNNRTSVMLKDRWRTMKKLKL) folds into the HTH myb-type domain. The H-T-H motif DNA-binding region spans 403–428 (WSKILLHYKFNNRTSVMLKDRWRTMK).

Homodimer; can contain both isoforms. Found in a complex with POT1; TINF2 and TNKS1. Interacts with ATM, TINF2, TNKS1, TNKS2, PINX1, NEK2 and MAPRE1. Component of the shelterin complex (telosome) composed of TERF1, TERF2, TINF2, TERF2IP ACD and POT1. Interacts with RLIM (via N-terminus). Interacts with FBXO4. Interaction with TINF2 protects against interaction with FBXO4 and subsequent polyubiquitination and proteasomal degradation. Interacts with GNL3L; this interaction promotes homodimerization. Interacts with TIN2. Interacts with RTEL1. Interactions with GNL3L and TIN2 are mutually exclusive. Interacts with CCDC79/TERB1. Interacts with TRIOBP isoform 1; mediates TERF1 localization to the centrosome. Post-translationally, phosphorylated preferentially on Ser-219 in an ATM-dependent manner in response to ionizing DNA damage. ADP-ribosylation by TNKS1 or TNKS2 diminishes its ability to bind to telomeric DNA. In terms of processing, ubiquitinated by RLIM/RNF12, leading to its degradation by the proteasome. Ubiquitinated by a SCF (SKP1-CUL1-F-box protein) ubiquitin-protein ligase complex, leading to its degradation by the proteasome. Highly expressed and ubiquitous. Isoform Pin2 predominates.

It is found in the nucleus. The protein resides in the cytoplasm. It localises to the cytoskeleton. Its subcellular location is the spindle. The protein localises to the chromosome. It is found in the telomere. Its function is as follows. Binds the telomeric double-stranded 5'-TTAGGG-3' repeat and negatively regulates telomere length. Involved in the regulation of the mitotic spindle. Component of the shelterin complex (telosome) that is involved in the regulation of telomere length and protection. Shelterin associates with arrays of double-stranded 5'-TTAGGG-3' repeats added by telomerase and protects chromosome ends; without its protective activity, telomeres are no longer hidden from the DNA damage surveillance and chromosome ends are inappropriately processed by DNA repair pathways. The polypeptide is Telomeric repeat-binding factor 1 (TERF1) (Homo sapiens (Human)).